Consider the following 434-residue polypeptide: Gamma-glutamyl phosphate reductase (434 aa).

The protein belongs to the gamma-glutamyl phosphate reductase family.

It is found in the cytoplasm. The enzyme catalyses L-glutamate 5-semialdehyde + phosphate + NADP(+) = L-glutamyl 5-phosphate + NADPH + H(+). It participates in amino-acid biosynthesis; L-proline biosynthesis; L-glutamate 5-semialdehyde from L-glutamate: step 2/2. Catalyzes the NADPH-dependent reduction of L-glutamate 5-phosphate into L-glutamate 5-semialdehyde and phosphate. The product spontaneously undergoes cyclization to form 1-pyrroline-5-carboxylate. This Pelotomaculum thermopropionicum (strain DSM 13744 / JCM 10971 / SI) protein is Gamma-glutamyl phosphate reductase.